Consider the following 515-residue polypeptide: Bifunctional purine biosynthesis protein PurH (515 aa).

Residues 1-145 (MTKRALISVS…KNHASVTVVV (145 aa)) enclose the MGS-like domain.

Belongs to the PurH family.

The enzyme catalyses (6R)-10-formyltetrahydrofolate + 5-amino-1-(5-phospho-beta-D-ribosyl)imidazole-4-carboxamide = 5-formamido-1-(5-phospho-D-ribosyl)imidazole-4-carboxamide + (6S)-5,6,7,8-tetrahydrofolate. The catalysed reaction is IMP + H2O = 5-formamido-1-(5-phospho-D-ribosyl)imidazole-4-carboxamide. The protein operates within purine metabolism; IMP biosynthesis via de novo pathway; 5-formamido-1-(5-phospho-D-ribosyl)imidazole-4-carboxamide from 5-amino-1-(5-phospho-D-ribosyl)imidazole-4-carboxamide (10-formyl THF route): step 1/1. It participates in purine metabolism; IMP biosynthesis via de novo pathway; IMP from 5-formamido-1-(5-phospho-D-ribosyl)imidazole-4-carboxamide: step 1/1. This Streptococcus pyogenes serotype M6 (strain ATCC BAA-946 / MGAS10394) protein is Bifunctional purine biosynthesis protein PurH.